The sequence spans 519 residues: Cytochrome P450 monooxygenase easM (519 aa).

A helical transmembrane segment spans residues 16–33; sequence VAPALFASSISVLFLILS. N-linked (GlcNAc...) asparagine glycans are attached at residues Asn-50 and Asn-353. Cys-458 contacts heme.

It belongs to the cytochrome P450 family. Requires heme as cofactor.

The protein localises to the membrane. The protein operates within alkaloid biosynthesis; ergot alkaloid biosynthesis. Cytochrome P450 monooxygenase; part of the gene cluster that mediates the biosynthesis of fumiclavanine C, a fungal ergot alkaloid. DmaW catalyzes the first step of ergot alkaloid biosynthesis by condensing dimethylallyl diphosphate (DMAP) and tryptophan to form 4-dimethylallyl-L-tryptophan. The second step is catalyzed by the methyltransferase easF that methylates 4-dimethylallyl-L-tryptophan in the presence of S-adenosyl-L-methionine, resulting in the formation of 4-dimethylallyl-L-abrine. The catalase easC and the FAD-dependent oxidoreductase easE then transform 4-dimethylallyl-L-abrine to chanoclavine-I which is further oxidized by EasD in the presence of NAD(+), resulting in the formation of chanoclavine-I aldehyde. EasA reduces chanoclavine-I aldehyde to dihydrochanoclavine-I aldehyde that spontaneously dehydrates to form 6,8-dimethyl-6,7-didehydroergoline. EasG then catalyzes the reduction of 6,8-dimethyl-6,7-didehydroergoline to form festuclavine. Hydrolysis of festuclavine by easM then leads to the formation of fumigaclavine B which is in turn acetylated by easN to fumigaclavine A. Finally, easL catalyzes the conversion of fumigaclavine A into fumigaclavine C by attaching a dimethylallyl moiety to C-2 of the indole nucleus. In Aspergillus fumigatus (strain ATCC MYA-4609 / CBS 101355 / FGSC A1100 / Af293) (Neosartorya fumigata), this protein is Cytochrome P450 monooxygenase easM.